Reading from the N-terminus, the 113-residue chain is Sperm-associated antigen 11B (113 aa).

The N-terminal stretch at 1 to 26 (MIPRLLPFFASLLFAALLFPGLSNAS) is a signal peptide. 3 disulfides stabilise this stretch: Cys-80–Cys-108, Cys-87–Cys-101, and Cys-91–Cys-109.

Belongs to the beta-defensin family.

The protein resides in the secreted. In terms of biological role, has antimicrobial activity against E.coli. Plays a role in the defense response in the male reproductive tract, contributing to sperm maturation, storage and protection. The protein is Sperm-associated antigen 11B of Mus musculus (Mouse).